The following is a 272-amino-acid chain: ATP phosphoribosyltransferase regulatory subunit (272 aa).

This sequence belongs to the class-II aminoacyl-tRNA synthetase family. HisZ subfamily. In terms of assembly, heteromultimer composed of HisG and HisZ subunits.

It localises to the cytoplasm. Its pathway is amino-acid biosynthesis; L-histidine biosynthesis; L-histidine from 5-phospho-alpha-D-ribose 1-diphosphate: step 1/9. Its function is as follows. Required for the first step of histidine biosynthesis. May allow the feedback regulation of ATP phosphoribosyltransferase activity by histidine. The protein is ATP phosphoribosyltransferase regulatory subunit of Staphylococcus aureus (strain USA300).